A 347-amino-acid polypeptide reads, in one-letter code: NADH-ubiquinone oxidoreductase chain 2 (347 aa).

The next 11 membrane-spanning stretches (helical) occupy residues 1 to 21, 25 to 45, 55 to 75, 96 to 116, 123 to 143, 145 to 165, 178 to 198, 199 to 219, 237 to 257, 274 to 294, and 324 to 344; these read MNPL…LITA, HWFL…PVLT, AAIK…MAIL, LMIL…FWVP, TLTS…SIMY, IFPV…IMVG, ILAY…PYNP, NITI…FLAL, LTWL…LPPL, GTLI…YFYM, and LLLP…PLTF.

The protein belongs to the complex I subunit 2 family. Core subunit of respiratory chain NADH dehydrogenase (Complex I) which is composed of 45 different subunits. Interacts with TMEM242.

It localises to the mitochondrion inner membrane. It carries out the reaction a ubiquinone + NADH + 5 H(+)(in) = a ubiquinol + NAD(+) + 4 H(+)(out). Functionally, core subunit of the mitochondrial membrane respiratory chain NADH dehydrogenase (Complex I) which catalyzes electron transfer from NADH through the respiratory chain, using ubiquinone as an electron acceptor. Essential for the catalytic activity and assembly of complex I. The protein is NADH-ubiquinone oxidoreductase chain 2 of Symphalangus syndactylus (Siamang).